The chain runs to 407 residues: Cation efflux system protein CusB (407 aa).

Residues 1–28 form the signal peptide; that stretch reads MKKIALIIGSMIAGGIISAAGFTWFAKA.

Belongs to the membrane fusion protein (MFP) (TC 8.A.1) family. In terms of assembly, the cus efflux system is composed of CusA, CusB, CusC and CusF.

Part of a cation efflux system that mediates resistance to copper and silver. The polypeptide is Cation efflux system protein CusB (cusB) (Escherichia coli O157:H7).